The chain runs to 422 residues: S-adenosylmethionine synthase (422 aa).

His-16 is a binding site for ATP. Asp-18 provides a ligand contact to Mg(2+). Glu-44 contacts K(+). 2 residues coordinate L-methionine: Glu-57 and Gln-100. Residues 100–110 (QSPDISQGVSA) form a flexible loop region. ATP contacts are provided by residues 175–177 (DGK), 251–252 (KF), Asp-260, 266–267 (RK), Ala-283, and Lys-287. Asp-260 is an L-methionine binding site. Position 291 (Lys-291) interacts with L-methionine.

Belongs to the AdoMet synthase family. In terms of assembly, homotetramer; dimer of dimers. Requires Mg(2+) as cofactor. It depends on K(+) as a cofactor.

Its subcellular location is the cytoplasm. It carries out the reaction L-methionine + ATP + H2O = S-adenosyl-L-methionine + phosphate + diphosphate. It functions in the pathway amino-acid biosynthesis; S-adenosyl-L-methionine biosynthesis; S-adenosyl-L-methionine from L-methionine: step 1/1. Catalyzes the formation of S-adenosylmethionine (AdoMet) from methionine and ATP. The overall synthetic reaction is composed of two sequential steps, AdoMet formation and the subsequent tripolyphosphate hydrolysis which occurs prior to release of AdoMet from the enzyme. This chain is S-adenosylmethionine synthase, found in Rippkaea orientalis (strain PCC 8801 / RF-1) (Cyanothece sp. (strain PCC 8801)).